The following is a 125-amino-acid chain: Large ribosomal subunit protein eL31 (125 aa).

Position 1 is an N-acetylmethionine (Met1). Ser15 carries the phosphoserine modification. An N6-succinyllysine mark is found at Lys55 and Lys70. N6-acetyllysine; alternate is present on Lys75. N6-succinyllysine; alternate is present on Lys75. Ser98 is subject to Phosphoserine.

This sequence belongs to the eukaryotic ribosomal protein eL31 family. In terms of assembly, component of the large ribosomal subunit.

It localises to the cytoplasm. Component of the large ribosomal subunit. The ribosome is a large ribonucleoprotein complex responsible for the synthesis of proteins in the cell. This chain is Large ribosomal subunit protein eL31 (RPL31), found in Oryctolagus cuniculus (Rabbit).